Here is a 77-residue protein sequence, read N- to C-terminus: Translation initiation factor IF-1, chloroplastic (77 aa).

Residues 1-71 (MKEQKWIHEG…TRGRIIYRLR (71 aa)) enclose the S1-like domain.

It belongs to the IF-1 family. In terms of assembly, component of the 30S ribosomal translation pre-initiation complex which assembles on the 30S ribosome in the order IF-2 and IF-3, IF-1 and N-formylmethionyl-tRNA(fMet); mRNA recruitment can occur at any time during PIC assembly.

It is found in the plastid. The protein localises to the chloroplast. Functionally, one of the essential components for the initiation of protein synthesis. Stabilizes the binding of IF-2 and IF-3 on the 30S subunit to which N-formylmethionyl-tRNA(fMet) subsequently binds. Helps modulate mRNA selection, yielding the 30S pre-initiation complex (PIC). Upon addition of the 50S ribosomal subunit IF-1, IF-2 and IF-3 are released leaving the mature 70S translation initiation complex. In Brexia madagascariensis, this protein is Translation initiation factor IF-1, chloroplastic.